We begin with the raw amino-acid sequence, 291 residues long: ATP synthase gamma chain (291 aa).

The protein belongs to the ATPase gamma chain family. As to quaternary structure, F-type ATPases have 2 components, CF(1) - the catalytic core - and CF(0) - the membrane proton channel. CF(1) has five subunits: alpha(3), beta(3), gamma(1), delta(1), epsilon(1). CF(0) has three main subunits: a, b and c.

The protein localises to the cell membrane. Its function is as follows. Produces ATP from ADP in the presence of a proton gradient across the membrane. The gamma chain is believed to be important in regulating ATPase activity and the flow of protons through the CF(0) complex. The polypeptide is ATP synthase gamma chain (Streptococcus equi subsp. equi (strain 4047)).